The primary structure comprises 481 residues: Dual specificity protein kinase CLK4 (481 aa).

Disordered regions lie at residues 1 to 46 (MRHS…CKPH) and 102 to 143 (SKSS…EDDE). Basic and acidic residues predominate over residues 8 to 24 (HCPDWDSRESWGHESYR). 2 stretches are compositionally biased toward basic residues: residues 25 to 34 (GSHKRKRRSH) and 106 to 136 (VRSR…RKRS). Phosphoserine occurs at positions 136 and 138. In terms of domain architecture, Protein kinase spans 159 to 475 (YEIVDTLGEG…LDEALQHPFF (317 aa)). ATP contacts are provided by residues 165-173 (LGEGAFGKV) and K189. The active-site Proton acceptor is D286.

It belongs to the protein kinase superfamily. CMGC Ser/Thr protein kinase family. Lammer subfamily. Interacts with UBL5. Post-translationally, autophosphorylates on all three types of residues. Expressed in liver, kidney, heart, muscle, brain and endothelial cells.

The protein resides in the nucleus. The catalysed reaction is L-seryl-[protein] + ATP = O-phospho-L-seryl-[protein] + ADP + H(+). It carries out the reaction L-threonyl-[protein] + ATP = O-phospho-L-threonyl-[protein] + ADP + H(+). It catalyses the reaction L-tyrosyl-[protein] + ATP = O-phospho-L-tyrosyl-[protein] + ADP + H(+). With respect to regulation, TG003 inhibits its kinase activity and affects the regulation of alternative splicing mediated by phosphorylation of SR proteins. Dual specificity kinase acting on both serine/threonine and tyrosine-containing substrates. Phosphorylates serine- and arginine-rich (SR) proteins of the spliceosomal complex and may be a constituent of a network of regulatory mechanisms that enable SR proteins to control RNA splicing. Phosphorylates SRSF1 and SRSF3. Required for the regulation of alternative splicing of MAPT/TAU. Regulates the alternative splicing of tissue factor (F3) pre-mRNA in endothelial cells. The protein is Dual specificity protein kinase CLK4 (CLK4) of Homo sapiens (Human).